Reading from the N-terminus, the 487-residue chain is 2-aminomuconic semialdehyde dehydrogenase (487 aa).

Gly209–Gly215 contributes to the NAD(+) binding site. Glu253 acts as the Proton acceptor in catalysis. The active-site Nucleophile is Cys287. Residue Ser362 is modified to Phosphoserine.

The protein belongs to the aldehyde dehydrogenase family. Highly expressed in adult kidney and liver. Detected at lower levels in fetal liver and kidney.

Its subcellular location is the cytoplasm. It carries out the reaction 2-aminomuconate 6-semialdehyde + NAD(+) + H2O = (2Z,4E)-2-aminomuconate + NADH + 2 H(+). It participates in amino-acid degradation; L-kynurenine degradation. Functionally, catalyzes the NAD-dependent oxidation of 2-aminomuconic semialdehyde of the kynurenine metabolic pathway in L-tryptophan degradation. This chain is 2-aminomuconic semialdehyde dehydrogenase, found in Homo sapiens (Human).